An 882-amino-acid polypeptide reads, in one-letter code: Cadherin-1 (882 aa).

The signal sequence occupies residues 1–23; sequence MGPWSRSLSALCCCCRCNPWLCR. The propeptide occupies 24-154; that stretch reads EPEPCIPGFG…PHHGLRRQKR (131 aa). Positions 117-137 are disordered; that stretch reads EVSAHHHHHHSHHDSPSGTQT. Cadherin domains are found at residues 154–262, 263–375, 376–486, 487–595, and 594–702; these read RDWV…KPQF, TQEV…APRF, NPTT…APIF, VPPQ…GPVP, and VPEP…RPAE. The Extracellular portion of the chain corresponds to 155–709; sequence DWVIPPISCP…PAEAGLQVPA (555 aa). O-linked (Man...) serine glycosylation is present at S280. T285, T358, T470, T472, and T509 each carry an O-linked (Man...) threonine glycan. N558 carries an N-linked (GlcNAc...) asparagine glycan. 3 O-linked (Man...) threonine glycosylation sites follow: T576, T578, and T580. N637 carries an N-linked (GlcNAc...) asparagine glycan. The chain crosses the membrane as a helical span at residues 710 to 730; it reads ILGILGGILAFLILILLLLLL. Over 731–882 the chain is Cytoplasmic; it reads VRRRRVVKEP…ADMYGGGEDD (152 aa). Residues 747–767 are disordered; the sequence is DTRDNVYYYDEEGGGEEDQDF. Residues Y753, Y754, and Y755 each carry the phosphotyrosine; by SRC modification. Acidic residues predominate over residues 755-767; the sequence is YDEEGGGEEDQDF. The interval 758–769 is required for binding CTNND1 and PSEN1; the sequence is EGGGEEDQDFDL. A phosphoserine mark is found at S770, S793, S838, S840, and S846. The required for binding alpha, beta and gamma catenins stretch occupies residues 811-882; the sequence is IDENLKAADS…ADMYGGGEDD (72 aa).

In terms of assembly, homodimer; disulfide-linked. Component of an E-cadherin/ catenin adhesion complex composed of at least E-cadherin/CDH1, beta-catenin/CTNNB1 or gamma-catenin/JUP, and potentially alpha-catenin/CTNNA1; the complex is located to adherens junctions. Found in a complex composed of CDH1, RAP1A and PKP3; PKP3 acts as a scaffold protein within the complex, the complex is required for CDH1 localization to mature desmosome cell junctions. Interacts with the TRPV4 and CTNNB1 complex. Interacts with CTNND1. The stable association of CTNNA1 is controversial as CTNNA1 was shown not to bind to F-actin when assembled in the complex. Alternatively, the CTNNA1-containing complex may be linked to F-actin by other proteins such as LIMA1. Interaction with PSEN1, cleaves CDH1 resulting in the disassociation of cadherin-based adherens junctions (CAJs). Interacts with AJAP1 and DLGAP5. Interacts with TBC1D2. Interacts with CAV1. Interacts with PIP5K1C. Interacts with RAB8B. Interacts with DDR1; this stabilizes CDH1 at the cell surface and inhibits its internalization. Interacts with RAPGEF2. Interacts with KLRG1. Forms a ternary complex composed of ADAM10, CADH1 and EPHA4; within the complex, CADH1 is cleaved by ADAM10 which disrupts adherens junctions. Interacts with SPEF1. Interacts with CTNNB1 and PKP2. Interacts with AMOTL2; the interaction may facilitate binding of radial actin fibers to cell junction complexes. Interacts with DSG3; the interaction is required for CDH1 localization to developing adherens junctions. During apoptosis or with calcium influx, cleaved by a membrane-bound metalloproteinase (ADAM10), PS1/gamma-secretase and caspase-3. Processing by the metalloproteinase, induced by calcium influx, causes disruption of cell-cell adhesion and the subsequent release of beta-catenin into the cytoplasm. The residual membrane-tethered cleavage product is rapidly degraded via an intracellular proteolytic pathway. Cleavage by caspase-3 releases the cytoplasmic tail resulting in disintegration of the actin microfilament system. The gamma-secretase-mediated cleavage promotes disassembly of adherens junctions. During development of the cochlear organ of Corti, cleavage by ADAM10 at adherens junctions promotes pillar cell separation. Post-translationally, N-glycosylation at Asn-637 is essential for expression, folding and trafficking. Addition of bisecting N-acetylglucosamine by MGAT3 modulates its cell membrane location. In terms of processing, ubiquitinated by a SCF complex containing SKP2, which requires prior phosphorylation by CK1/CSNK1A1. Ubiquitinated by CBLL1/HAKAI, requires prior phosphorylation at Tyr-754. O-glycosylated. O-manosylated by TMTC1, TMTC2, TMTC3 or TMTC4. Thr-285 and Thr-509 are O-mannosylated by TMTC2 or TMTC4 but not TMTC1 or TMTC3.

It localises to the cell junction. The protein resides in the adherens junction. Its subcellular location is the cell membrane. The protein localises to the endosome. It is found in the golgi apparatus. It localises to the trans-Golgi network. The protein resides in the cytoplasm. Its subcellular location is the desmosome. Cadherins are calcium-dependent cell adhesion proteins. They preferentially interact with themselves in a homophilic manner in connecting cells; cadherins may thus contribute to the sorting of heterogeneous cell types. CDH1 is involved in mechanisms regulating cell-cell adhesions, mobility and proliferation of epithelial cells. Promotes organization of radial actin fiber structure and cellular response to contractile forces, via its interaction with AMOTL2 which facilitates anchoring of radial actin fibers to CDH1 junction complexes at the cell membrane. Plays a role in the early stages of desmosome cell-cell junction formation via facilitating the recruitment of DSG2 and DSP to desmosome plaques. Has a potent invasive suppressor role. It is a ligand for integrin alpha-E/beta-7. Its function is as follows. E-Cad/CTF2 promotes non-amyloidogenic degradation of Abeta precursors. Has a strong inhibitory effect on APP C99 and C83 production. The sequence is that of Cadherin-1 (CDH1) from Bos taurus (Bovine).